Here is a 417-residue protein sequence, read N- to C-terminus: NADH-quinone oxidoreductase subunit D (417 aa).

It belongs to the complex I 49 kDa subunit family. NDH-1 is composed of 14 different subunits. Subunits NuoB, C, D, E, F, and G constitute the peripheral sector of the complex.

It is found in the cell inner membrane. It catalyses the reaction a quinone + NADH + 5 H(+)(in) = a quinol + NAD(+) + 4 H(+)(out). NDH-1 shuttles electrons from NADH, via FMN and iron-sulfur (Fe-S) centers, to quinones in the respiratory chain. The immediate electron acceptor for the enzyme in this species is believed to be ubiquinone. Couples the redox reaction to proton translocation (for every two electrons transferred, four hydrogen ions are translocated across the cytoplasmic membrane), and thus conserves the redox energy in a proton gradient. The sequence is that of NADH-quinone oxidoreductase subunit D from Halorhodospira halophila (strain DSM 244 / SL1) (Ectothiorhodospira halophila (strain DSM 244 / SL1)).